Here is a 95-residue protein sequence, read N- to C-terminus: Auxin-responsive protein SAUR27 (95 aa).

Belongs to the ARG7 family. Interacts with PP2C-D1. Higher expression in thermo-responsive cultivars (e.g. cv. Alst-1, cv. Ang-0 and cv. Com-0) than in low thermo-responsive cultivars (e.g. cv. Dja-1, cv. El-0 and cv. Kon).

The protein resides in the cell membrane. Functionally, functions as a positive effector of cell expansion through modulation of auxin transport. Involved in thermo-responsiveness of plant architecture. Enhances plasma membrane H(+)-ATPase. This chain is Auxin-responsive protein SAUR27, found in Arabidopsis thaliana (Mouse-ear cress).